Consider the following 809-residue polypeptide: AP-3 complex subunit beta (809 aa).

5 HEAT repeats span residues Y37–S76, D112–A151, I153–N186, D187–E224, and K524–D561. 4 positions are modified to phosphoserine: S693, S698, S724, and S726. Disordered stretches follow at residues F708–Q739 and P763–L809. Polar residues predominate over residues G722–Q739. Over residues E772 to S791 the composition is skewed to acidic residues. A compositionally biased stretch (low complexity) spans D792 to L809.

This sequence belongs to the adaptor complexes large subunit family. Adaptor protein complex 3 (AP-3) is a heterotetramer composed of 2 large adaptins (APL5 and APL6), a medium adaptin (APM3) and a small adaptin (APS3). In terms of processing, pyrophosphorylated by 5-diphosphoinositol pentakisphosphate (5-IP7). Serine pyrophosphorylation is achieved by Mg(2+)-dependent, but enzyme independent transfer of a beta-phosphate from a inositol pyrophosphate to a pre-phosphorylated serine residue.

The protein localises to the golgi apparatus. The protein resides in the cytoplasmic vesicle. It localises to the clathrin-coated vesicle membrane. Its function is as follows. Part of the AP-3 complex, an adaptor-related complex which is not clathrin-associated. The complex is associated with the Golgi region as well as more peripheral structures. It facilitates the budding of vesicles from the Golgi membrane and may be directly involved in trafficking to the vacuole. Required for the transport via the ALP pathway, which directs the transport of the cargo proteins PHO8 and VAM3 to the vacuole. This Saccharomyces cerevisiae (strain ATCC 204508 / S288c) (Baker's yeast) protein is AP-3 complex subunit beta (APL6).